The primary structure comprises 303 residues: Hemolysin E (303 aa).

Cysteine 87 and cysteine 285 are disulfide-bonded. A helical membrane pass occupies residues 179-199 (AGAAAGIVAGPFGLIISYSIA).

It belongs to the hemolysin E family. In terms of assembly, monomer and oligomer. In periplasm, it is present as a monomer, while in outer membrane vesicles, it oligomerizes to form a pore structure that is active. The pore is formed by a dodecamer. Post-translationally, in periplasm, it forms a disulfide bond, which prevents the oligomerization. In outer membrane vesicles, the redox status prevents formation of the disulfide bond, leading to oligomerization and pore formation.

It localises to the secreted. The protein localises to the periplasm. The protein resides in the host cell membrane. Toxin, which has some hemolytic activity towards mammalian cells. Acts by forming a pore-like structure upon contact with mammalian cells. This chain is Hemolysin E (hlyE), found in Salmonella typhi.